The following is a 357-amino-acid chain: Dihydroorotate dehydrogenase (quinone) (357 aa).

FMN is bound by residues 66 to 70 (AGFDK) and threonine 90. A substrate-binding site is contributed by lysine 70. 115-119 (NRMGF) provides a ligand contact to substrate. Residues asparagine 143 and asparagine 176 each coordinate FMN. Asparagine 176 contacts substrate. Residue serine 179 is the Nucleophile of the active site. Residue asparagine 181 coordinates substrate. Residues lysine 212 and threonine 240 each contribute to the FMN site. 241 to 242 (NT) lines the substrate pocket. FMN contacts are provided by residues glycine 264, glycine 293, and 314–315 (YT).

It belongs to the dihydroorotate dehydrogenase family. Type 2 subfamily. Monomer. FMN serves as cofactor.

It is found in the cell membrane. The enzyme catalyses (S)-dihydroorotate + a quinone = orotate + a quinol. It functions in the pathway pyrimidine metabolism; UMP biosynthesis via de novo pathway; orotate from (S)-dihydroorotate (quinone route): step 1/1. Its function is as follows. Catalyzes the conversion of dihydroorotate to orotate with quinone as electron acceptor. The sequence is that of Dihydroorotate dehydrogenase (quinone) from Mycobacterium tuberculosis (strain ATCC 25177 / H37Ra).